The following is a 283-amino-acid chain: Bifunctional protein FolD (283 aa).

Residues 165 to 167 and S190 contribute to the NADP(+) site; that span reads GRS.

It belongs to the tetrahydrofolate dehydrogenase/cyclohydrolase family. In terms of assembly, homodimer.

The enzyme catalyses (6R)-5,10-methylene-5,6,7,8-tetrahydrofolate + NADP(+) = (6R)-5,10-methenyltetrahydrofolate + NADPH. It carries out the reaction (6R)-5,10-methenyltetrahydrofolate + H2O = (6R)-10-formyltetrahydrofolate + H(+). It functions in the pathway one-carbon metabolism; tetrahydrofolate interconversion. Catalyzes the oxidation of 5,10-methylenetetrahydrofolate to 5,10-methenyltetrahydrofolate and then the hydrolysis of 5,10-methenyltetrahydrofolate to 10-formyltetrahydrofolate. The sequence is that of Bifunctional protein FolD from Variovorax paradoxus (strain S110).